A 162-amino-acid chain; its full sequence is Large ribosomal subunit protein eL24 (162 aa).

Disordered stretches follow at residues 64-83 (DIHAEAAKKRRRTTKKPYSR) and 117-162 (ERIK…GGKR). A compositionally biased stretch (basic residues) spans 71 to 81 (KKRRRTTKKPY). Over residues 117 to 135 (ERIKKTKDEKKAKKAEVTK) the composition is skewed to basic and acidic residues.

This sequence belongs to the eukaryotic ribosomal protein eL24 family.

It localises to the cytoplasm. The polypeptide is Large ribosomal subunit protein eL24 (RPL24) (Hordeum vulgare (Barley)).